A 658-amino-acid chain; its full sequence is UvrABC system protein B (658 aa).

A Helicase ATP-binding domain is found at 25 to 182; the sequence is ESLNGGNSHQ…KGLVDIQYSR (158 aa). 38–45 provides a ligand contact to ATP; it reads GVTGSGKT. Positions 91–114 match the Beta-hairpin motif; the sequence is YYDYYQPEAYIPQTDTYIEKDASI. Residues 429–595 form the Helicase C-terminal domain; sequence QIDDLYSEIN…TVQKKVHDVI (167 aa). Residues 622–657 form the UVR domain; that stretch reads KELIAKLQEEMKQAAKELEFEKAAELRDLIMELKTA.

It belongs to the UvrB family. In terms of assembly, forms a heterotetramer with UvrA during the search for lesions. Interacts with UvrC in an incision complex.

The protein localises to the cytoplasm. Its function is as follows. The UvrABC repair system catalyzes the recognition and processing of DNA lesions. A damage recognition complex composed of 2 UvrA and 2 UvrB subunits scans DNA for abnormalities. Upon binding of the UvrA(2)B(2) complex to a putative damaged site, the DNA wraps around one UvrB monomer. DNA wrap is dependent on ATP binding by UvrB and probably causes local melting of the DNA helix, facilitating insertion of UvrB beta-hairpin between the DNA strands. Then UvrB probes one DNA strand for the presence of a lesion. If a lesion is found the UvrA subunits dissociate and the UvrB-DNA preincision complex is formed. This complex is subsequently bound by UvrC and the second UvrB is released. If no lesion is found, the DNA wraps around the other UvrB subunit that will check the other stand for damage. This chain is UvrABC system protein B, found in Natranaerobius thermophilus (strain ATCC BAA-1301 / DSM 18059 / JW/NM-WN-LF).